The following is a 421-amino-acid chain: Synaptotagmin-12 (421 aa).

The Vesicular segment spans residues 1–18 (MAVDVTEYHLSVIKSPPG). Residues 19–39 (WEVGVYAAGALALLGIAAVSL) form a helical membrane-spanning segment. Residues 40 to 421 (WKLWTSGSFP…VSMWHPVRRN (382 aa)) lie on the Cytoplasmic side of the membrane. At Ser-97 the chain carries Phosphoserine; by PKA. Phosphoserine is present on residues Ser-99 and Ser-214. 2 consecutive C2 domains span residues 152–272 (TLGQ…SGWL) and 283–416 (AVGE…SMWH).

It belongs to the synaptotagmin family. Homodimer. Can also form heterodimers. Interacts with SYT1. Phosphorylation of Ser-97 is required for mossy-fiber long-term potentiation. Expressed in the brain, specifically by neurons in the hippocampus, and in the adrenal medulla (at protein level).

It localises to the cytoplasmic vesicle. Its subcellular location is the secretory vesicle. The protein localises to the synaptic vesicle membrane. Synaptic vesicle phosphoprotein that enhances spontaneous neurotransmitter release but does not effect induced neurotransmitter release. Unlike other synaptotagmins, it does not bind Ca(2+) or phospholipids. Essential for mossy-fiber long-term potentiation in the hippocampus. This Mus musculus (Mouse) protein is Synaptotagmin-12.